Reading from the N-terminus, the 424-residue chain is Putative ankyrin repeat protein R858 (424 aa).

ANK repeat units follow at residues 115–144 (HLMCACIYSINDSNLELVKLLVNNFNFTKR), 147–177 (TDHTALSYAFKNPGNIKIIGFLLNYIESDYF), 184–215 (INDSLIYWSKTDYLPCIEMAKLLIKAEASINY), and 219–252 (TGSTILINIINNKNYYNITDLVKFLLTEGVDIHE).

The sequence is that of Putative ankyrin repeat protein R858 from Acanthamoeba polyphaga (Amoeba).